The following is a 351-amino-acid chain: Nicotinate-nucleotide--dimethylbenzimidazole phosphoribosyltransferase (351 aa).

Glutamate 317 serves as the catalytic Proton acceptor.

This sequence belongs to the CobT family.

The catalysed reaction is 5,6-dimethylbenzimidazole + nicotinate beta-D-ribonucleotide = alpha-ribazole 5'-phosphate + nicotinate + H(+). Its pathway is nucleoside biosynthesis; alpha-ribazole biosynthesis; alpha-ribazole from 5,6-dimethylbenzimidazole: step 1/2. In terms of biological role, catalyzes the synthesis of alpha-ribazole-5'-phosphate from nicotinate mononucleotide (NAMN) and 5,6-dimethylbenzimidazole (DMB). The sequence is that of Nicotinate-nucleotide--dimethylbenzimidazole phosphoribosyltransferase from Pseudomonas aeruginosa (strain ATCC 15692 / DSM 22644 / CIP 104116 / JCM 14847 / LMG 12228 / 1C / PRS 101 / PAO1).